Reading from the N-terminus, the 638-residue chain is Rik1-associated factor 1 (638 aa).

WD repeat units follow at residues 297–336, 486–525, 544–583, and 587–626; these read KEYS…CGIF, TTQK…KPLS, EVDA…PFIQ, and EMNS…GNKF.

Component of the Clr4 methyltransferase complex (ClrC) composed of at least clr4, rik1, pcu4, rbx1, raf1 and raf2. The cullin pcu4, rik1, raf1, raf2 and the ring-box protein rbx1 are components of an E3 ubiquitin ligase, whose activity is essential for heterochromatin assembly. Interacts with nup189.

The protein localises to the cytoplasm. Its subcellular location is the nucleus. The protein resides in the chromosome. Functionally, component of the Clr4 methyltransferase complex (ClrC) which contributes to the establishment of heterochromatin by specifically methylating histone H3 to form H3K9me. ClrC preferentially ubiquitylates H3K14 and ClrC-mediated H3 ubiquitination promotes clr4 methyltransferase activity for the methylation of H3K9. H3K9me represents a specific tag for epigenetic transcriptional repression by recruiting swi6/HP1 to methylated histones which leads to transcriptional silencing within centromeric heterochromatin, telomeric regions and at the silent mating-type loci. Has a role in both mitotic and meiotic chromosome segregation. This chain is Rik1-associated factor 1 (raf1), found in Schizosaccharomyces pombe (strain 972 / ATCC 24843) (Fission yeast).